The sequence spans 560 residues: Aluminum-activated malate transporter 12 (560 aa).

Helical transmembrane passes span 54–74, 78–98, 104–124, 130–150, 156–176, and 189–209; these read VGLSLTLVSLLYLMEPLFKGI, AIWAVMTVVVVLEFSAGATLC, GLGTLIAGSLAFFIEFVANDS, AIFIGTAVFIIGAAATYIRFI, NYDYGVVIFLLTFNLITVSSY, and FYTIAVGCGICLFMSLLVFPI. A disordered region spans residues 386 to 421; the sequence is LHRHNNKHQNGSISNNKHHQRNSSNSGKDLNGDVSL. Positions 407–421 are enriched in polar residues; the sequence is NSSNSGKDLNGDVSL.

Belongs to the aromatic acid exporter (TC 2.A.85) family. Expressed in roots, stems, leaves, flowers and pollen. Mainly detected in the roots vascular stele and in the leaves guard cells.

The protein localises to the cell membrane. Its function is as follows. Malate-sensitive anion transporter permeable to chloride, nitrate, sulfate and malate. Involved in dark-, CO(2)-, abscisic acid- and water-deficient-induced stomatal closure. Belongs to the R-type anion channels. The polypeptide is Aluminum-activated malate transporter 12 (ALMT12) (Arabidopsis thaliana (Mouse-ear cress)).